The following is a 288-amino-acid chain: Light-independent protochlorophyllide reductase iron-sulfur ATP-binding protein (288 aa).

Residues 10-15 (GIGKST) and Lys-39 each bind ATP. Ser-14 is a binding site for Mg(2+). [4Fe-4S] cluster is bound by residues Cys-95 and Cys-129. Residues 180–181 (NR) and 204–206 (PLL) contribute to the ATP site.

It belongs to the NifH/BchL/ChlL family. In terms of assembly, homodimer. Protochlorophyllide reductase is composed of three subunits; ChlL, ChlN and ChlB. Requires [4Fe-4S] cluster as cofactor.

The protein resides in the plastid. Its subcellular location is the chloroplast. The catalysed reaction is chlorophyllide a + oxidized 2[4Fe-4S]-[ferredoxin] + 2 ADP + 2 phosphate = protochlorophyllide a + reduced 2[4Fe-4S]-[ferredoxin] + 2 ATP + 2 H2O. It functions in the pathway porphyrin-containing compound metabolism; chlorophyll biosynthesis (light-independent). Its function is as follows. Component of the dark-operative protochlorophyllide reductase (DPOR) that uses Mg-ATP and reduced ferredoxin to reduce ring D of protochlorophyllide (Pchlide) to form chlorophyllide a (Chlide). This reaction is light-independent. The L component serves as a unique electron donor to the NB-component of the complex, and binds Mg-ATP. This chain is Light-independent protochlorophyllide reductase iron-sulfur ATP-binding protein, found in Stigeoclonium helveticum (Green alga).